The following is a 275-amino-acid chain: Translation initiation factor 2 subunit alpha (275 aa).

An S1 motif domain is found at 12–83 (GEFVVATVKN…EKGHIDLSLK (72 aa)).

The protein belongs to the eIF-2-alpha family. Heterotrimer composed of an alpha, a beta and a gamma chain.

In terms of biological role, eIF-2 functions in the early steps of protein synthesis by forming a ternary complex with GTP and initiator tRNA. The protein is Translation initiation factor 2 subunit alpha of Thermococcus kodakarensis (strain ATCC BAA-918 / JCM 12380 / KOD1) (Pyrococcus kodakaraensis (strain KOD1)).